The primary structure comprises 622 residues: Threonine--tRNA ligase (622 aa).

The interval 1-141 (MKTLLIHSDY…SRKITTERKE (141 aa)) is editing domain. The interval 199–498 (PHVKYIKEKE…TLENRPPALP (300 aa)) is catalytic. Cysteine 291, histidine 343, and histidine 467 together coordinate Zn(2+).

Belongs to the class-II aminoacyl-tRNA synthetase family. As to quaternary structure, homodimer. It depends on Zn(2+) as a cofactor.

The protein resides in the cytoplasm. It catalyses the reaction tRNA(Thr) + L-threonine + ATP = L-threonyl-tRNA(Thr) + AMP + diphosphate + H(+). Functionally, catalyzes the attachment of threonine to tRNA(Thr) in a two-step reaction: L-threonine is first activated by ATP to form Thr-AMP and then transferred to the acceptor end of tRNA(Thr). Also edits incorrectly charged L-seryl-tRNA(Thr). This Methanococcus maripaludis (strain C6 / ATCC BAA-1332) protein is Threonine--tRNA ligase.